An 821-amino-acid polypeptide reads, in one-letter code: Calpain-3 (821 aa).

Positions Ala7–Gly37 are disordered. The 344-residue stretch at Leu74–Thr417 folds into the Calpain catalytic domain. Catalysis depends on residues Cys129, His334, and Asn358. Residues Ala418–Asn586 are domain III. The tract at residues Thr587–Glu649 is linker. The segment at Ala609 to Gln652 is disordered. The segment covering Glu622–Lys634 has biased composition (basic and acidic residues). Residues Gln635–Asp645 are compositionally biased toward low complexity. 4 EF-hand domains span residues Glu649–Lys683, Phe692–Lys725, Asn722–His757, and Val787–Ala821. The segment at Glu650–Ala821 is domain IV. Residues Ala662, Asp665, Glu667, Glu672, Asp705, Asp707, Ser709, Lys711, Glu716, Asp735, Asp737, Ser739, Thr741, Glu746, Asp800, Asp802, Asp804, and Ile806 each contribute to the Ca(2+) site.

The protein belongs to the peptidase C2 family. In terms of assembly, homodimer; via EF-hand domain 4. Interacts with TTN/titin. Interacts with CMYA5; this interaction, which results in CMYA5 proteolysis, may protect CAPN3 from autolysis. Interacts with SIMC1. Interacts with UTP25; the interaction is required for CAPN3 translocation to the nucleolus. Isoform I is skeletal muscle specific.

The protein localises to the cytoplasm. It localises to the nucleus. The protein resides in the nucleolus. The enzyme catalyses Broad endopeptidase activity.. Its activity is regulated as follows. Activated by micromolar concentrations of calcium and inhibited by calpastatin. Functionally, calcium-regulated non-lysosomal thiol-protease. Proteolytically cleaves CTBP1 at 'His-409'. Mediates, with UTP25, the proteasome-independent degradation of p53/TP53. The chain is Calpain-3 from Homo sapiens (Human).